The primary structure comprises 275 residues: MSIHQTIKRITAAEIRSRKGQEPIVSLTAYQAYSARIADPYCDFLLVGDSVGMVVHGFETTLPVSLDMMILHGQAVMRGAKKALVVIDMPFGSYEESPEQAFSNASRILAETGCGAVKLEGGVYIAETIDFLCKRGIPVMGHIGLTPQAVNRFGGFKTQGRNESNWQQIEADAAAIEEAGAFAVVVEGVVEPLAVRLTEMLSIPTIGIGASSQCDGQILVMEDMLGYGTWVPKFVRRYGALEQEMEKAIKSYADDVKSRAFPSEAEIYKLKQKSG.

Mg(2+)-binding residues include D49 and D88. Residues 49–50, D88, and K118 contribute to the 3-methyl-2-oxobutanoate site; that span reads DS. E120 serves as a coordination point for Mg(2+). E187 functions as the Proton acceptor in the catalytic mechanism.

This sequence belongs to the PanB family. In terms of assembly, homodecamer; pentamer of dimers. It depends on Mg(2+) as a cofactor.

Its subcellular location is the cytoplasm. The catalysed reaction is 3-methyl-2-oxobutanoate + (6R)-5,10-methylene-5,6,7,8-tetrahydrofolate + H2O = 2-dehydropantoate + (6S)-5,6,7,8-tetrahydrofolate. The protein operates within cofactor biosynthesis; (R)-pantothenate biosynthesis; (R)-pantoate from 3-methyl-2-oxobutanoate: step 1/2. In terms of biological role, catalyzes the reversible reaction in which hydroxymethyl group from 5,10-methylenetetrahydrofolate is transferred onto alpha-ketoisovalerate to form ketopantoate. This is 3-methyl-2-oxobutanoate hydroxymethyltransferase from Bartonella quintana (strain Toulouse) (Rochalimaea quintana).